The primary structure comprises 277 residues: Release factor glutamine methyltransferase (277 aa).

Residues 117–121 (GTGCG), aspartate 140, tryptophan 168, and asparagine 182 contribute to the S-adenosyl-L-methionine site. Residue 182–185 (NPPY) participates in substrate binding.

The protein belongs to the protein N5-glutamine methyltransferase family. PrmC subfamily.

The enzyme catalyses L-glutaminyl-[peptide chain release factor] + S-adenosyl-L-methionine = N(5)-methyl-L-glutaminyl-[peptide chain release factor] + S-adenosyl-L-homocysteine + H(+). In terms of biological role, methylates the class 1 translation termination release factors RF1/PrfA and RF2/PrfB on the glutamine residue of the universally conserved GGQ motif. The polypeptide is Release factor glutamine methyltransferase (Buchnera aphidicola subsp. Acyrthosiphon pisum (strain APS) (Acyrthosiphon pisum symbiotic bacterium)).